Reading from the N-terminus, the 131-residue chain is Profilin-7 (131 aa).

A disulfide bond links Cys-13 and Cys-115. Positions 81–97 (AVIRGKKGAGGITIKKT) match the Involved in PIP2 interaction motif. Thr-111 is modified (phosphothreonine).

This sequence belongs to the profilin family. As to quaternary structure, occurs in many kinds of cells as a complex with monomeric actin in a 1:1 ratio. Post-translationally, phosphorylated by MAP kinases.

It localises to the cytoplasm. Its subcellular location is the cytoskeleton. Binds to actin and affects the structure of the cytoskeleton. At high concentrations, profilin prevents the polymerization of actin, whereas it enhances it at low concentrations. In Olea europaea (Common olive), this protein is Profilin-7.